A 664-amino-acid chain; its full sequence is Glycine--tRNA ligase beta subunit (664 aa).

It belongs to the class-II aminoacyl-tRNA synthetase family. As to quaternary structure, tetramer of two alpha and two beta subunits.

The protein resides in the cytoplasm. The catalysed reaction is tRNA(Gly) + glycine + ATP = glycyl-tRNA(Gly) + AMP + diphosphate. The protein is Glycine--tRNA ligase beta subunit (glyS) of Aquifex aeolicus (strain VF5).